The chain runs to 167 residues: Phosphopantetheine adenylyltransferase (167 aa).

Ser9 contributes to the substrate binding site. ATP contacts are provided by residues 9–10 (SF) and His17. 3 residues coordinate substrate: Lys41, Val78, and Arg92. Residues 93–95 (GLR), Glu103, and 128–134 (SRPITAT) each bind ATP.

This sequence belongs to the bacterial CoaD family. Homohexamer. Mg(2+) serves as cofactor.

The protein resides in the cytoplasm. The catalysed reaction is (R)-4'-phosphopantetheine + ATP + H(+) = 3'-dephospho-CoA + diphosphate. It participates in cofactor biosynthesis; coenzyme A biosynthesis; CoA from (R)-pantothenate: step 4/5. Its function is as follows. Reversibly transfers an adenylyl group from ATP to 4'-phosphopantetheine, yielding dephospho-CoA (dPCoA) and pyrophosphate. The protein is Phosphopantetheine adenylyltransferase of Rhizobium rhizogenes (strain K84 / ATCC BAA-868) (Agrobacterium radiobacter).